Consider the following 457-residue polypeptide: CUB1 family protein C30C2.08 (457 aa).

2 coiled-coil regions span residues 119–174 and 418–448; these read TQND…NISK and QELVNSLLTQCHQLIEELRDEKHQHDIEERE.

The protein belongs to the CUB1 family.

It localises to the cytoplasm. Its subcellular location is the nucleus. Involved in bleomycin tolerance with links to DNA repair and/or proteasome function. This is CUB1 family protein C30C2.08 from Schizosaccharomyces pombe (strain 972 / ATCC 24843) (Fission yeast).